Reading from the N-terminus, the 430-residue chain is Dye-decolorizing peroxidase Tfu_3078 (430 aa).

A signal peptide (tat-type signal) is located at residues 1 to 39; sequence MTEPDTERKGSSRRGFLAGLGAAALTGAGIGMAAGEVLR. Positions 42–75 are disordered; it reads LPDSDPAASPEAEQRLRMAAQRADATAAPQPGIS. Residues 60 to 69 show a composition bias toward low complexity; it reads AAQRADATAA. Residue Asp242 is the Proton acceptor of the active site. A heme-binding site is contributed by His338.

It belongs to the DyP-type peroxidase family. In terms of assembly, monomer. It depends on heme b as a cofactor. Exported by the Tat system. The position of the signal peptide cleavage has not been experimentally proven.

It is found in the secreted. The enzyme catalyses Reactive Blue 5 + 2 H2O2 = 2,2'-disulfonyl azobenzene + 3-[(4-amino-6-chloro-1,3,5-triazin-2-yl)amino]benzenesulfonate + phthalate + 2 H2O + 2 H(+). In terms of biological role, peroxidase that is able to convert a large number of compounds, but its physiological substrate is not known. Shows high reactivity towards anthraquinone dyes (e.g. Reactive Blue 19) and a modest activity towards standard peroxidase substrates (such as guaiacol and 2,6-dimethoxyphenol) and azo dyes (e.g. Reactive Blue 5). Is also able to oxidize aromatic sulfides enantioselectively, resulting in the corresponding (R)-sulfoxides, but with a poor efficiency. Does not display catalase activity. In Thermobifida fusca (strain YX), this protein is Dye-decolorizing peroxidase Tfu_3078.